A 314-amino-acid chain; its full sequence is ATP synthase gamma chain (314 aa).

Belongs to the ATPase gamma chain family. As to quaternary structure, F-type ATPases have 2 components, CF(1) - the catalytic core - and CF(0) - the membrane proton channel. CF(1) has five subunits: alpha(3), beta(3), gamma(1), delta(1), epsilon(1). CF(0) has three main subunits: a, b and c.

The protein localises to the cellular thylakoid membrane. Functionally, produces ATP from ADP in the presence of a proton gradient across the membrane. The gamma chain is believed to be important in regulating ATPase activity and the flow of protons through the CF(0) complex. This Synechocystis sp. (strain ATCC 27184 / PCC 6803 / Kazusa) protein is ATP synthase gamma chain.